Consider the following 292-residue polypeptide: Elongation factor Ts (292 aa).

The segment at 82–85 is involved in Mg(2+) ion dislocation from EF-Tu; it reads TDFV.

This sequence belongs to the EF-Ts family.

The protein resides in the cytoplasm. Associates with the EF-Tu.GDP complex and induces the exchange of GDP to GTP. It remains bound to the aminoacyl-tRNA.EF-Tu.GTP complex up to the GTP hydrolysis stage on the ribosome. The protein is Elongation factor Ts of Bordetella petrii (strain ATCC BAA-461 / DSM 12804 / CCUG 43448).